Here is a 216-residue protein sequence, read N- to C-terminus: Pyrophosphatase PpaX (216 aa).

Aspartate 9 functions as the Nucleophile in the catalytic mechanism.

This sequence belongs to the HAD-like hydrolase superfamily. PpaX family. The cofactor is Mg(2+).

The enzyme catalyses diphosphate + H2O = 2 phosphate + H(+). In terms of biological role, hydrolyzes pyrophosphate formed during P-Ser-HPr dephosphorylation by HPrK/P. Might play a role in controlling the intracellular pyrophosphate pool. The protein is Pyrophosphatase PpaX of Bacillus anthracis (strain CDC 684 / NRRL 3495).